The chain runs to 144 residues: 3-dehydroquinate dehydratase (144 aa).

The active-site Proton acceptor is Tyr22. Substrate contacts are provided by Asn74, His80, and Asp87. The Proton donor role is filled by His100. Substrate-binding positions include 101–102 (LS) and Arg111.

The protein belongs to the type-II 3-dehydroquinase family. As to quaternary structure, homododecamer.

The enzyme catalyses 3-dehydroquinate = 3-dehydroshikimate + H2O. It participates in metabolic intermediate biosynthesis; chorismate biosynthesis; chorismate from D-erythrose 4-phosphate and phosphoenolpyruvate: step 3/7. Catalyzes a trans-dehydration via an enolate intermediate. In Clostridium perfringens (strain ATCC 13124 / DSM 756 / JCM 1290 / NCIMB 6125 / NCTC 8237 / Type A), this protein is 3-dehydroquinate dehydratase.